The primary structure comprises 757 residues: Chloride anion exchanger (757 aa).

Residues 1–71 are Cytoplasmic-facing; it reads MIEAIGNQYV…SWLPAYKIKE (71 aa). Residues 72–92 form a helical membrane-spanning segment; sequence WLLSDIVSGISTGLVAVLQGL. A topological domain (extracellular) is located at residue alanine 93. Residues 94-114 form a helical membrane-spanning segment; sequence FALLVNIPPAYGLYAAFFPVI. The Cytoplasmic portion of the chain corresponds to 115–124; that stretch reads TYFFLGTSRH. The chain crosses the membrane as a helical span at residues 125-145; sequence ISVGPFPVLSMMVGVVVTRVV. The Extracellular segment spans residues 146–176; that stretch reads SDPNASSELSSSSTENDSFIEEKVMVAASVT. 2 N-linked (GlcNAc...) asparagine glycosylation sites follow: asparagine 149 and asparagine 161. A helical membrane pass occupies residues 177–197; sequence VLSGIIQLLLGVLQVGFVVIY. Residues 198–201 lie on the Cytoplasmic side of the membrane; sequence LSES. The chain crosses the membrane as a helical span at residues 202–222; it reads LISGFTTAAAIHVLVSQLKFM. Residues 223-250 are Extracellular-facing; the sequence is LQLPVPAYSDPFSIFKVLESVFTQIQKT. A helical transmembrane segment spans residues 251-271; it reads NIADLVTSVIILVVVFVFKEI. Over 272 to 278 the chain is Cytoplasmic; it reads NQRYRSK. A helical membrane pass occupies residues 279–299; sequence LPVPIPIELIMTVIATGVSYG. Residues 300–335 are Extracellular-facing; sequence CNFEDRFGVAVVGNMSLGFQPPITPSVEVFQDTIGD. Residues 336 to 356 form a helical membrane-spanning segment; sequence SFGIAIVGFAVAFSVASVYSL. At 357–367 the chain is on the cytoplasmic side; that stretch reads KYDYPIDGNQE. A helical transmembrane segment spans residues 368–388; it reads LIALGVSNIFTGAFKGFAGST. The Extracellular portion of the chain corresponds to 389–404; that stretch reads ALSRSGVQESTGGKTQ. The helical transmembrane segment at 405 to 425 threads the bilayer; it reads VAGLLSAVIVLIVIVAIGFLL. Residues 426–462 lie on the Cytoplasmic side of the membrane; that stretch reads QPLQKSVLAALALGNLKGMLMQFAEIGRLWKKDKYDC. Residues 463 to 483 form a helical membrane-spanning segment; that stretch reads LIWIMTFIFAIVLGLGLGLAA. Residues 484 to 757 lie on the Extracellular side of the membrane; sequence SVAFQLLTIV…ECQVPVETKF (274 aa). The 196-residue stretch at 518–713 folds into the STAS domain; that stretch reads NYAEVYEPEG…LTIHDAILHI (196 aa). A PDZ-binding motif is present at residues 754–757; sequence ETKF.

It belongs to the SLC26A/SulP transporter (TC 2.A.53) family. Interacts with PDZK1. Interacts with CFTR, SLC26A6 and NHERF1. Interacts (via PDZ-binding motif) with NHERF4 (via the third PDZ domain). This interaction leads to decreased expression of SLC26A3 on the cell membrane resulting in its reduced exchanger activity. N-glycosylation is required for efficient cell surface expression, and protection from proteolytic degradation. Expressed in spermatogenic cells. Expressed at high levels in cecum and colon and at lower levels in small intestine.

The protein localises to the apical cell membrane. It is found in the membrane. Its subcellular location is the cell membrane. It carries out the reaction hydrogencarbonate(in) + 2 chloride(out) = hydrogencarbonate(out) + 2 chloride(in). Functionally, mediates chloride-bicarbonate exchange with a chloride bicarbonate stoichiometry of 2:1 in the intestinal epithelia. Plays a role in the chloride and bicarbonate homeostasis during sperm epididymal maturation and capacitation. The sequence is that of Chloride anion exchanger (Slc26a3) from Mus musculus (Mouse).